The following is a 1558-amino-acid chain: Calmodulin-regulated spectrin-associated protein 1-B (1558 aa).

The Calponin-homology (CH) domain occupies 231-346 (WYWKLVPVRY…FIAELFWWFE (116 aa)). 3 stretches are compositionally biased toward polar residues: residues 400-417 (VQNS…SGFS), 440-450 (ACRNRSNSLTQ), and 504-516 (ASTV…SHPG). 7 disordered regions span residues 400–464 (VQNS…SDKR), 504–523 (ASTV…VRRI), 551–585 (NDIT…SDSR), 602–675 (AKEK…APGQ), 737–790 (TKEL…VASG), 803–850 (QRFG…QNKD), and 943–968 (DRSK…SSSP). Residues 602-620 (AKEKSISLNKEEESGEGRQ) are compositionally biased toward basic and acidic residues. A compositionally biased stretch (polar residues) spans 643–658 (QTLNRTFTPNTSSEFE). Over residues 737-772 (TKELHPDKKQHFEEEVESAKLREDMNVKEHEDKDGG) the composition is skewed to basic and acidic residues. 2 stretches are compositionally biased toward low complexity: residues 776–790 (SSPG…VASG) and 812–822 (RSSTSSSQRTT). The stretch at 849–887 (KDNANMLASELVQLHMQLEEKRRAIESQKKKMEILTARQ) forms a coiled coil. Residues 943–955 (DRSKEAEEPEKAS) show a composition bias toward basic and acidic residues. The stretch at 971–1004 (VEEEVDLNECNRSIELLNEAIGSIQQQMMQLSLQ) forms a coiled coil. Disordered regions lie at residues 1041-1131 (FVEP…TFHL), 1257-1293 (LRKQ…RREL), 1305-1344 (ELCE…KCPA), and 1360-1414 (LASV…ITST). A compositionally biased stretch (low complexity) spans 1080-1090 (SSTPTPTDSPS). Polar residues predominate over residues 1106-1115 (DFVQSSVRSE). Positions 1243–1303 (AFLLKQQRKA…IKQEYLRKKQ (61 aa)) form a coiled coil. Positions 1317–1328 (PKTKPKKQRLKS) are enriched in basic residues. Positions 1421–1555 (GPKLFKEPSA…QAKRPAGPKK (135 aa)) constitute a CKK domain.

Belongs to the CAMSAP1 family.

It is found in the cytoplasm. The protein resides in the cytoskeleton. Its function is as follows. Key microtubule-organizing protein that specifically binds the minus-end of non-centrosomal microtubules and regulates their dynamics and organization. Specifically recognizes growing microtubule minus-ends and stabilizes microtubules. Acts on free microtubule minus-ends that are not capped by microtubule-nucleating proteins or other factors and protects microtubule minus-ends from depolymerization. In contrast to camsap2 and camsap3, tracks along the growing tips of minus-end microtubules without significantly affecting the polymerization rate: binds at the very tip of the microtubules minus-end and acts as a minus-end tracking protein (-TIP) that dissociates from microtubules after allowing tubulin incorporation. Through interaction with spectrin may regulate neurite outgrowth. The sequence is that of Calmodulin-regulated spectrin-associated protein 1-B (camsap1b) from Danio rerio (Zebrafish).